A 426-amino-acid chain; its full sequence is Serine hydroxymethyltransferase (426 aa).

Residues L121 and 125 to 127 contribute to the (6S)-5,6,7,8-tetrahydrofolate site; that span reads GHL. Residue K230 is modified to N6-(pyridoxal phosphate)lysine. 354–356 is a binding site for (6S)-5,6,7,8-tetrahydrofolate; the sequence is SPF.

This sequence belongs to the SHMT family. In terms of assembly, homodimer. The cofactor is pyridoxal 5'-phosphate.

It is found in the cytoplasm. It catalyses the reaction (6R)-5,10-methylene-5,6,7,8-tetrahydrofolate + glycine + H2O = (6S)-5,6,7,8-tetrahydrofolate + L-serine. It functions in the pathway one-carbon metabolism; tetrahydrofolate interconversion. Its pathway is amino-acid biosynthesis; glycine biosynthesis; glycine from L-serine: step 1/1. In terms of biological role, catalyzes the reversible interconversion of serine and glycine with tetrahydrofolate (THF) serving as the one-carbon carrier. This reaction serves as the major source of one-carbon groups required for the biosynthesis of purines, thymidylate, methionine, and other important biomolecules. Also exhibits THF-independent aldolase activity toward beta-hydroxyamino acids, producing glycine and aldehydes, via a retro-aldol mechanism. In Gloeobacter violaceus (strain ATCC 29082 / PCC 7421), this protein is Serine hydroxymethyltransferase.